The primary structure comprises 127 residues: Large ribosomal subunit protein uL24A (127 aa).

This sequence belongs to the universal ribosomal protein uL24 family. Component of the large ribosomal subunit (LSU). Mature yeast ribosomes consist of a small (40S) and a large (60S) subunit. The 40S small subunit contains 1 molecule of ribosomal RNA (18S rRNA) and 33 different proteins (encoded by 57 genes). The large 60S subunit contains 3 rRNA molecules (25S, 5.8S and 5S rRNA) and 46 different proteins (encoded by 81 genes).

The protein localises to the cytoplasm. In terms of biological role, component of the ribosome, a large ribonucleoprotein complex responsible for the synthesis of proteins in the cell. The small ribosomal subunit (SSU) binds messenger RNAs (mRNAs) and translates the encoded message by selecting cognate aminoacyl-transfer RNA (tRNA) molecules. The large subunit (LSU) contains the ribosomal catalytic site termed the peptidyl transferase center (PTC), which catalyzes the formation of peptide bonds, thereby polymerizing the amino acids delivered by tRNAs into a polypeptide chain. The nascent polypeptides leave the ribosome through a tunnel in the LSU and interact with protein factors that function in enzymatic processing, targeting, and the membrane insertion of nascent chains at the exit of the ribosomal tunnel. This chain is Large ribosomal subunit protein uL24A, found in Saccharomyces cerevisiae (strain ATCC 204508 / S288c) (Baker's yeast).